A 557-amino-acid polypeptide reads, in one-letter code: Potassium-transporting ATPase potassium-binding subunit (557 aa).

12 helical membrane-spanning segments follow: residues 5–25 (GFLLIATFLLVLMVLARPLGS), 63–83 (LCAILGLNMLGLAVLFFMLLG), 132–152 (GLTVQNFLSAASGIAVIFALI), 170–190 (LLRITLWVLAPVALLIALFFI), 253–273 (FVQMLAIFLIPTALCFAFGEV), 283–303 (LLWAMSVIFVICVGVVMWAEV), 329–349 (VLVSSLFAVVTTAASCGAVIA), 356–376 (ALGGMVPMWLMQIGEVVFGGV), 379–399 (GLYGMMLFVLLAVFIAGLMIG), 416–436 (LTALAILVTPTLVLMGAALAM), 484–504 (LLALCMFVGRFGVIIPVMAIA), and 526–546 (LFVGLLIGTVLLVGALTFIPA).

The protein belongs to the KdpA family. The system is composed of three essential subunits: KdpA, KdpB and KdpC.

It localises to the cell inner membrane. Functionally, part of the high-affinity ATP-driven potassium transport (or Kdp) system, which catalyzes the hydrolysis of ATP coupled with the electrogenic transport of potassium into the cytoplasm. This subunit binds the periplasmic potassium ions and delivers the ions to the membrane domain of KdpB through an intramembrane tunnel. The protein is Potassium-transporting ATPase potassium-binding subunit of Escherichia coli O81 (strain ED1a).